The primary structure comprises 786 residues: Pentatricopeptide repeat-containing protein 10, chloroplastic (786 aa).

A disordered region spans residues 1–71 (MEATGRGLFP…HQTPTPPHSF (71 aa)). A chloroplast-targeting transit peptide spans 1 to 95 (MEATGRGLFP…HPLPTLAAFL (95 aa)). Pro residues predominate over residues 27–36 (PAAPPPPSPS). A compositionally biased stretch (low complexity) spans 37–50 (SLPLDSLLLHLTAP). PPR repeat units lie at residues 137-167 (DASA…TPLP), 173-207 (DVRA…GVAP), 208-243 (TLVT…GVEP), 244-278 (DGFT…GHAP), 279-313 (CVVT…GCQP), 314-348 (DAVT…GLLP), 349-383 (NAFT…GFVP), 384-418 (NVNT…GCTP), 419-453 (NRVT…GVEL), 454-488 (SRDT…GFTP), 489-523 (CITT…GFKP), 524-558 (NEQS…GAVF), 560-594 (SWVI…GYNP), 595-629 (DLVI…GLSP), 630-664 (DLIT…QTMK), 666-700 (DVVS…GMAP), 701-735 (CAVT…GLKP), and 736-770 (MELT…DLDF).

It belongs to the PPR family. P subfamily. In terms of assembly, forms homodimers.

It localises to the plastid. The protein resides in the chloroplast stroma. Involved in chloroplast mRNA stability. Binds specifically to two intergenic RNA regions of similar sequence located in the chloroplast atpH 5'-UTR and psaJ 3'-UTR, and serves as a barrier to RNA decay. Binding to a specific site in the intergenic region of the chloroplast atpH is sufficient to block 5'-3' and 3'-5' exonucleases. Acts as a protein barrier to block mRNA degradation by exonucleases, and defines processed mRNA termini in chloroplasts. Remodels the structure of the atpH ribosome-binding site in a manner that can account for its ability to enhance translation. Stabilizes a RNA 3'-end downstream from psaI. Binds atpH RNA as a monomer. This Zea mays (Maize) protein is Pentatricopeptide repeat-containing protein 10, chloroplastic.